The sequence spans 337 residues: Inositol 2-dehydrogenase (337 aa).

It belongs to the Gfo/Idh/MocA family. As to quaternary structure, homotetramer.

It carries out the reaction myo-inositol + NAD(+) = scyllo-inosose + NADH + H(+). Involved in the oxidation of myo-inositol (MI) to 2-keto-myo-inositol (2KMI or 2-inosose). This Burkholderia lata (strain ATCC 17760 / DSM 23089 / LMG 22485 / NCIMB 9086 / R18194 / 383) protein is Inositol 2-dehydrogenase.